The primary structure comprises 253 residues: uncharacterized protein (253 aa).

Residues Gly45, Asp66–Ala67, Ala94–Glu95, and Arg110 each bind S-adenosyl-L-methionine.

It belongs to the methyltransferase superfamily.

This is an uncharacterized protein from Bacillus subtilis (strain 168).